The following is a 243-amino-acid chain: Venom nerve growth factor 5 (243 aa).

An N-terminal signal peptide occupies residues 1-18 (MSMLCYTLIIAFLIGIWA). Positions 19-125 (APKSEDNVPL…TLNRNIRTKR (107 aa)) are excised as a propeptide. Over residues 47–66 (GLKTSRNTDQRHPAPKKAED) the composition is skewed to basic and acidic residues. The disordered stretch occupies residues 47–67 (GLKTSRNTDQRHPAPKKAEDQ). 3 cysteine pairs are disulfide-bonded: cysteine 139–cysteine 204, cysteine 182–cysteine 232, and cysteine 192–cysteine 234. Asparagine 148 is a glycosylation site (N-linked (GlcNAc...) asparagine).

It belongs to the NGF-beta family. Homodimer; non-covalently linked. In terms of tissue distribution, expressed by the venom gland.

Its subcellular location is the secreted. Nerve growth factor is important for the development and maintenance of the sympathetic and sensory nervous systems. It stimulates division and differentiation of sympathetic and embryonic sensory neurons as well as basal forebrain cholinergic neurons in the brain. Its relevance in the snake venom is not clear. However, it has been shown to inhibit metalloproteinase-dependent proteolysis of platelet glycoprotein Ib alpha, suggesting a metalloproteinase inhibition to prevent metalloprotease autodigestion and/or protection against prey proteases. Binds a lipid between the two protein chains in the homodimer. The lipid-bound form promotes histamine relase from mouse mast cells, contrary to the lipid-free form. The polypeptide is Venom nerve growth factor 5 (Tropidechis carinatus (Australian rough-scaled snake)).